We begin with the raw amino-acid sequence, 190 residues long: dITP/XTP pyrophosphatase (190 aa).

Position 10-15 (10-15) interacts with substrate; the sequence is TTNKHK. Residues Glu-39 and Asp-68 each contribute to the Mg(2+) site. Asp-68 acts as the Proton acceptor in catalysis. Substrate contacts are provided by residues Ala-69, 143-146, Lys-166, and 171-172; these read FGYD and HR.

This sequence belongs to the HAM1 NTPase family. In terms of assembly, homodimer. The cofactor is Mg(2+).

It catalyses the reaction XTP + H2O = XMP + diphosphate + H(+). The enzyme catalyses dITP + H2O = dIMP + diphosphate + H(+). It carries out the reaction ITP + H2O = IMP + diphosphate + H(+). Pyrophosphatase that catalyzes the hydrolysis of nucleoside triphosphates to their monophosphate derivatives, with a high preference for the non-canonical purine nucleotides XTP (xanthosine triphosphate), dITP (deoxyinosine triphosphate) and ITP. Seems to function as a house-cleaning enzyme that removes non-canonical purine nucleotides from the nucleotide pool, thus preventing their incorporation into DNA/RNA and avoiding chromosomal lesions. The polypeptide is dITP/XTP pyrophosphatase (Hyperthermus butylicus (strain DSM 5456 / JCM 9403 / PLM1-5)).